Here is a 523-residue protein sequence, read N- to C-terminus: Transcription factor MYB120 (523 aa).

HTH myb-type domains lie at 23-75 and 76-130; these read GVIL…ANHL and RPNL…KRLL. 2 DNA-binding regions (H-T-H motif) span residues 51 to 75 and 103 to 126; these read WNAVQKNTGLARCGKSCRLRWANHL and WARMAAQLPGRTDNEIKNYWNTRL. 4 disordered regions span residues 140-254, 332-373, 396-426, and 444-470; these read DIIP…YPTL, QTAT…SHYT, QIPQIDGFNNVNNFTDNERQNHNLNSSGAHR, and LASGGRGRPPKRRQLTASLPNHNNNTN. Residues 147-167 are compositionally biased toward basic residues; sequence LHPHPHHQQQQQHNHHHHHHQ. The segment covering 175–185 has biased composition (polar residues); it reads MYFQPQSSQRN. Low complexity-rich tracts occupy residues 202–212, 223–232, and 341–368; these read SSSSFTFHTTT, TPNTPSQLSS, and NPYSSSPSFSLNPSSSSYPTSTSSPSFL. The segment covering 396-410 has biased composition (polar residues); it reads QIPQIDGFNNVNNFT.

As to expression, expressed in pollen grains and pollen tube. Mostly expressed in mature pollen grains, and, to a lower extent, in inflorescences and siliques.

The protein localises to the nucleus. Its function is as follows. Transcription activator. Binds to 5'-CAACTGTC-3' and/or 5'-TAACAAA-3' motif in target gene promoter to promote their expression. Together with MYB97 and MYB101, functions as a male factor that controls pollen tube-synergid interaction in fertilization. Required for pollen tube growth arrest and sperm cell release in the female gametophyte, probably via the regulation of pollen tube-specific gene expression. This is Transcription factor MYB120 from Arabidopsis thaliana (Mouse-ear cress).